A 258-amino-acid chain; its full sequence is Triosephosphate isomerase (258 aa).

Residue 11-13 (NWK) coordinates substrate. Histidine 101 acts as the Electrophile in catalysis. The active-site Proton acceptor is the glutamate 173. Substrate contacts are provided by residues glycine 179, serine 219, and 240-241 (GG).

Belongs to the triosephosphate isomerase family. Homodimer.

It is found in the cytoplasm. It carries out the reaction D-glyceraldehyde 3-phosphate = dihydroxyacetone phosphate. It functions in the pathway carbohydrate biosynthesis; gluconeogenesis. Its pathway is carbohydrate degradation; glycolysis; D-glyceraldehyde 3-phosphate from glycerone phosphate: step 1/1. Its function is as follows. Involved in the gluconeogenesis. Catalyzes stereospecifically the conversion of dihydroxyacetone phosphate (DHAP) to D-glyceraldehyde-3-phosphate (G3P). The chain is Triosephosphate isomerase from Streptomyces coelicolor (strain ATCC BAA-471 / A3(2) / M145).